Reading from the N-terminus, the 372-residue chain is tRNA-specific 2-thiouridylase MnmA (372 aa).

Residues 17-24 (GMSGGVDS) and methionine 43 each bind ATP. Residues 103 to 105 (NPD) form an interaction with target base in tRNA region. Cysteine 108 (nucleophile) is an active-site residue. Cysteine 108 and cysteine 205 are disulfide-bonded. Position 133 (glycine 133) interacts with ATP. Positions 155-157 (KDQ) are interaction with tRNA. Cysteine 205 serves as the catalytic Cysteine persulfide intermediate. Residues 317 to 318 (RY) are interaction with tRNA.

The protein belongs to the MnmA/TRMU family.

The protein localises to the cytoplasm. The enzyme catalyses S-sulfanyl-L-cysteinyl-[protein] + uridine(34) in tRNA + AH2 + ATP = 2-thiouridine(34) in tRNA + L-cysteinyl-[protein] + A + AMP + diphosphate + H(+). Catalyzes the 2-thiolation of uridine at the wobble position (U34) of tRNA, leading to the formation of s(2)U34. The chain is tRNA-specific 2-thiouridylase MnmA from Shewanella sediminis (strain HAW-EB3).